A 200-amino-acid polypeptide reads, in one-letter code: MGFVDGFSAFLHSSGAVKFGDFELSGGGRSPYYFDLRSVPSHPHQFRGMIRGLLDSVISEVGLDRFDTLASIPTGGLVVASALAIEAVKPLVYARAAAKGHGTGRTVEGIVRYGARALIIDDVATTGGSVIRAAESLRAAGAIVTDAFVVIDRMEGAEGRLGAEGIKLHRLAGALEVARSLHAAGLIPGDVMRQVEGRTR.

Residues R95, K99, H101, and 121–129 (DDVATTGGS) each bind 5-phospho-alpha-D-ribose 1-diphosphate. The orotate site is built by T125 and R153.

This sequence belongs to the purine/pyrimidine phosphoribosyltransferase family. PyrE subfamily. As to quaternary structure, homodimer. Mg(2+) serves as cofactor.

The enzyme catalyses orotidine 5'-phosphate + diphosphate = orotate + 5-phospho-alpha-D-ribose 1-diphosphate. It functions in the pathway pyrimidine metabolism; UMP biosynthesis via de novo pathway; UMP from orotate: step 1/2. Catalyzes the transfer of a ribosyl phosphate group from 5-phosphoribose 1-diphosphate to orotate, leading to the formation of orotidine monophosphate (OMP). This Cenarchaeum symbiosum (strain A) protein is Orotate phosphoribosyltransferase.